The primary structure comprises 502 residues: Ubiquitin-like-specific protease 1A (502 aa).

Catalysis depends on residues His-393, Asp-410, and Cys-461.

This sequence belongs to the peptidase C48 family.

Protease that catalyzes two essential functions in the SUMO pathway: processing of full-length SUMOs to their mature forms and deconjugation of SUMO from targeted proteins. Cleaves precursors of SUM1 and SUM2, and very inefficiently of SUM3. Seems to be the only ULP1 able to cleave SUM3 precursors. Cleaves SUMO peptides better than SUMO-conjugated proteins. The chain is Ubiquitin-like-specific protease 1A (ULP1A) from Arabidopsis thaliana (Mouse-ear cress).